The chain runs to 648 residues: Pumilio homolog 3 (648 aa).

The disordered stretch occupies residues 1–124; sequence MEVKGKKQFT…KKKKELKQSR (124 aa). Residues 17–27 show a composition bias toward basic and acidic residues; it reads AQEKNRFHKNS. Lys-33 carries the post-translational modification N6-acetyllysine. Basic residues predominate over residues 60-69; it reads LGKKGVKQFK. Basic and acidic residues predominate over residues 94–124; that stretch reads FQPDGRSDESAAKKPKWDDFKKKKKELKQSR. Positions 106–118 match the Nuclear localization signal motif; that stretch reads KKPKWDDFKKKKK. Residues 143–510 form the PUM-HD domain; the sequence is EILRRKDCDK…VVLDKSACVL (368 aa). Pumilio repeat units lie at residues 177 to 212, 213 to 248, 249 to 277, 289 to 325, 326 to 361, 362 to 397, 398 to 435, 436 to 504, 505 to 551, 552 to 596, and 597 to 636; these read HDST…LSKA, KYSR…MLRH, AEAS…ELYG, RTLD…VIKH, SLVH…LAHT, HDGA…VANG, QYSH…IVND, KYGR…VVLD, KSAC…IAEH, PAGH…WASV, and NRGA…KSTS. The tract at residues 289 to 297 is HA-8; sequence RTLDKVLEV.

In terms of assembly, interacts with PARP1 (via catalytic domain). In terms of tissue distribution, widely expressed.

The protein resides in the nucleus. The protein localises to the nucleolus. It localises to the nucleoplasm. It is found in the chromosome. In terms of biological role, inhibits the poly(ADP-ribosyl)ation activity of PARP1 and the degradation of PARP1 by CASP3 following genotoxic stress. Binds to double-stranded RNA or DNA without sequence specificity. Involved in development of the eye and of primordial germ cells. This chain is Pumilio homolog 3, found in Homo sapiens (Human).